Consider the following 219-residue polypeptide: MSDHRHRFLQLALTADALRFGQFTLKSGRLSPYFFNAGRFDSGSLLSQLGACYADAIDASGIKYDVVFGPAYKGIPLATAMACELAQRGRDLPLSFNRKEAKDHGEGGQLIGADMQGKRVLIVDDVITAGTAIREALGIIRAAGGTPAGIVVALDRQEIASETDRRSAAQSVAEEAGIPVIAVASLADLLDFASGNPELVGYRQPLEAYRAQYGVRSIR.

Lys-26 contributes to the 5-phospho-alpha-D-ribose 1-diphosphate binding site. An orotate-binding site is contributed by 34–35 (FF). Residues 72 to 73 (YK), Arg-98, Lys-99, Lys-102, His-104, and 124 to 132 (DDVITAGTA) contribute to the 5-phospho-alpha-D-ribose 1-diphosphate site. The orotate site is built by Thr-128 and Arg-156.

This sequence belongs to the purine/pyrimidine phosphoribosyltransferase family. PyrE subfamily. Homodimer. It depends on Mg(2+) as a cofactor.

It catalyses the reaction orotidine 5'-phosphate + diphosphate = orotate + 5-phospho-alpha-D-ribose 1-diphosphate. It participates in pyrimidine metabolism; UMP biosynthesis via de novo pathway; UMP from orotate: step 1/2. Functionally, catalyzes the transfer of a ribosyl phosphate group from 5-phosphoribose 1-diphosphate to orotate, leading to the formation of orotidine monophosphate (OMP). The sequence is that of Orotate phosphoribosyltransferase from Stenotrophomonas maltophilia (strain K279a).